Consider the following 430-residue polypeptide: DD-carboxypeptidase/endopeptidase Mpg (430 aa).

Residues His295, Asp299, and His375 each contribute to the Zn(2+) site.

Belongs to the peptidase M23B family. Monomer. The cofactor is Zn(2+). In terms of processing, likely to be synthesized as a proenzyme. The cleavage of the N-terminal domain is probably required for the activation of the enzyme.

It localises to the cell outer membrane. Functionally, has both endopeptidase and DD-carboxypeptidase activities. Degrades cell wall peptidoglycan (PG) to allow consummate expression of pili. This chain is DD-carboxypeptidase/endopeptidase Mpg, found in Neisseria meningitidis serogroup B (strain ATCC 13091 / M2091).